Consider the following 487-residue polypeptide: GDP-Man:Man(3)GlcNAc(2)-PP-Dol alpha-1,2-mannosyltransferase (487 aa).

At 1 to 16 the chain is on the lumenal side; the sequence is MAGILCLCGMMRLLTA. The helical transmembrane segment at 17–37 threads the bilayer; it reads LFIPVLIASIGLCLVLVLLFI. Residues 38 to 231 lie on the Cytoplasmic side of the membrane; it reads CTRLWIQRKK…SNNPVLSRLK (194 aa). Residues 232-252 constitute an intramembrane region (helical); it reads LIYYYLFAVIYGWVGSCSDVI. Topologically, residues 253-394 are cytoplasmic; sequence MVNSTWTFAH…IGLHTMWNEH (142 aa). Positions 395–415 form an intramembrane region, helical; the sequence is FGIGIVECMAAGTIILAHNSG. Topologically, residues 416 to 487 are cytoplasmic; the sequence is GPKLDIVVPY…FLASSEPLFM (72 aa).

It belongs to the glycosyltransferase group 1 family. Glycosyltransferase 4 subfamily.

It is found in the endoplasmic reticulum membrane. The enzyme catalyses an alpha-D-Man-(1-&gt;3)-[alpha-D-Man-(1-&gt;6)]-beta-D-Man-(1-&gt;4)-beta-D-GlcNAc-(1-&gt;4)-alpha-D-GlcNAc-diphospho-di-trans,poly-cis-dolichol + 2 GDP-alpha-D-mannose = an alpha-D-Man-(1-&gt;2)-alpha-D-Man-(1-&gt;2)-alpha-D-Man-(1-&gt;3)-[alpha-D-Man-(1-&gt;6)]-beta-D-Man-(1-&gt;4)-beta-D-GlcNAc-(1-&gt;4)-alpha-D-GlcNAc-diphospho-di-trans,poly-cis-dolichol + 2 GDP + 2 H(+). It participates in protein modification; protein glycosylation. GDP-Man:Man(3)GlcNAc(2)-PP-Dol alpha-1,2-mannosyltransferase that operates in the biosynthetic pathway of dolichol-linked oligosaccharides, the glycan precursors employed in protein asparagine (N)-glycosylation. The assembly of dolichol-linked oligosaccharides begins on the cytosolic side of the endoplasmic reticulum membrane and finishes in its lumen. The sequential addition of sugars to dolichol pyrophosphate produces dolichol-linked oligosaccharides containing fourteen sugars, including two GlcNAcs, nine mannoses and three glucoses. Once assembled, the oligosaccharide is transferred from the lipid to nascent proteins by oligosaccharyltransferases. Catalyzes, on the cytoplasmic face of the endoplasmic reticulum, the addition of the fourth and fifth mannose residues to the dolichol-linked oligosaccharide chain, to produce Man(5)GlcNAc(2)-PP-dolichol core oligosaccharide. Man(5)GlcNAc(2)-PP-dolichol is a substrate for ALG3, the following enzyme in the biosynthetic pathway. This is GDP-Man:Man(3)GlcNAc(2)-PP-Dol alpha-1,2-mannosyltransferase (alg11) from Xenopus tropicalis (Western clawed frog).